The following is a 194-amino-acid chain: UPF0301 protein CBU_2093 (194 aa).

This sequence belongs to the UPF0301 (AlgH) family.

The chain is UPF0301 protein CBU_2093 from Coxiella burnetii (strain RSA 493 / Nine Mile phase I).